The chain runs to 453 residues: UDP-N-acetylmuramoylalanine--D-glutamate ligase (453 aa).

120 to 126 (GSNGKST) is a binding site for ATP.

Belongs to the MurCDEF family.

It is found in the cytoplasm. It carries out the reaction UDP-N-acetyl-alpha-D-muramoyl-L-alanine + D-glutamate + ATP = UDP-N-acetyl-alpha-D-muramoyl-L-alanyl-D-glutamate + ADP + phosphate + H(+). The protein operates within cell wall biogenesis; peptidoglycan biosynthesis. Its function is as follows. Cell wall formation. Catalyzes the addition of glutamate to the nucleotide precursor UDP-N-acetylmuramoyl-L-alanine (UMA). The protein is UDP-N-acetylmuramoylalanine--D-glutamate ligase of Teredinibacter turnerae (strain ATCC 39867 / T7901).